The primary structure comprises 163 residues: Inner membrane protein YcdZ (163 aa).

The Cytoplasmic portion of the chain corresponds to 1 to 2 (MN). Residues 3–23 (ILLSIAITTGILSGIWGWVAV) form a helical membrane-spanning segment. Position 24 (Ser24) is a topological domain, periplasmic. A helical transmembrane segment spans residues 25 to 45 (LGLLSWAGFLGCTAYFACPQG). Residues 46 to 48 (GLK) are Cytoplasmic-facing. The chain crosses the membrane as a helical span at residues 49–69 (GLAISAATLLSGVVWAMVIIY). Topologically, residues 70 to 71 (GS) are periplasmic. A helical transmembrane segment spans residues 72–92 (ALAPHLEILGYVITGIVAFLM). The Cytoplasmic segment spans residues 93 to 98 (CIQAKQ). A helical transmembrane segment spans residues 99–119 (LLLSFVPGTFIGACATFAGQG). Over 120-122 (DWK) the chain is Periplasmic. Residues 123–143 (LVLPSLALGLIFGYAMKNSGL) traverse the membrane as a helical segment. Residues 144-163 (WLAARSAKTAHREQEIKNKA) lie on the Cytoplasmic side of the membrane.

To E.coli YahC.

The protein resides in the cell inner membrane. The protein is Inner membrane protein YcdZ (ycdZ) of Escherichia coli (strain K12).